Here is a 380-residue protein sequence, read N- to C-terminus: MANLRKTHPLLKIANDALVDLPAPSNISVWWNFGSLLGLCLATQILTGLFLAMHYTSDISTAFSSVCHICRDVSYGWLIRNIHANGASFFFICIYMHIARGLYYGSYLYKETWNIGVVLLLLTMMTAFVGYVLPWGQMSFWGATVITNLLSAVPYVGGALVQWIWGGFSVDNATLTRFFAFHFLFPFVIAAATVLHLLFLHETGSNNPAGINSDADKISFHPYFSYKDLLGFVAMLLGLTSLALFAPNLLGDPDNFTPANPLVTPPHIKPEWYFLFAYAILRSIPNKLGGVLALLFSILVLMVVPILHTSKQRGLTFRPLTQFLFWTLVADMLILTWIGGMPVEHPFIIIGQVASVIYFTIFLVLAPLAGWAENKALEWT.

4 helical membrane-spanning segments follow: residues 33 to 53, 77 to 98, 113 to 133, and 178 to 198; these read FGSL…FLAM, WLIR…YMHI, WNIG…GYVL, and FFAF…LHLL. The heme b site is built by His83 and His97. Heme b contacts are provided by His182 and His196. An a ubiquinone-binding site is contributed by His201. Transmembrane regions (helical) follow at residues 226–246, 288–308, 320–340, and 347–367; these read YKDL…ALFA, LGGV…PILH, LTQF…WIGG, and FIII…VLAP.

It belongs to the cytochrome b family. In terms of assembly, the cytochrome bc1 complex contains 3 respiratory subunits (MT-CYB, CYC1 and UQCRFS1), 2 core proteins (UQCRC1 and UQCRC2) and probably 6 low-molecular weight proteins. Requires heme b as cofactor.

The protein localises to the mitochondrion inner membrane. Its function is as follows. Component of the ubiquinol-cytochrome c reductase complex (complex III or cytochrome b-c1 complex) that is part of the mitochondrial respiratory chain. The b-c1 complex mediates electron transfer from ubiquinol to cytochrome c. Contributes to the generation of a proton gradient across the mitochondrial membrane that is then used for ATP synthesis. This Salmo trutta (Brown trout) protein is Cytochrome b (mt-cyb).